Here is a 2528-residue protein sequence, read N- to C-terminus: Squalestatin tetraketide synthase clz2 (2528 aa).

A Ketosynthase family 3 (KS3) domain is found at 14–409 (TVPIAIVGMS…GANAHVILES (396 aa)). Catalysis depends on for beta-ketoacyl synthase activity residues cysteine 187, histidine 291, and histidine 331. Positions 420-457 (VNGHHQKNGTTNGHKGANGTTNELNGTNGTANGHDITT) are disordered. The segment covering 436–452 (ANGTTNELNGTNGTANG) has biased composition (low complexity). Positions 538 to 856 (GAQWFAMGRE…PYLSCLLRGQ (319 aa)) are malonyl-CoA:ACP transacylase (MAT) domain. The segment at 925 to 1063 (HDLLGSLIPG…GRIAIELDTS (139 aa)) is N-terminal hotdog fold. In terms of domain architecture, PKS/mFAS DH spans 925–1239 (HDLLGSLIPG…NQSVGQIALQ (315 aa)). Residues 925-1239 (HDLLGSLIPG…NQSVGQIALQ (315 aa)) are dehydratase (DH) domain. Histidine 957 acts as the Proton acceptor; for dehydratase activity in catalysis. The interval 1083–1239 (TRSVDPSNLY…NQSVGQIALQ (157 aa)) is C-terminal hotdog fold. Residue aspartate 1148 is the Proton donor; for dehydratase activity of the active site. Positions 1390 to 1590 (LYRYYTDAIK…GLDVELRDCD (201 aa)) are methyltransferase (CMet) domain. Residues 1817–2130 (GLIDTLQFSK…AGKHMGKIVI (314 aa)) form an enoyl reductase (ER) (ER) domain region. The tract at residues 2153-2331 (ASYLIVGGLG…AVSIDLGMVQ (179 aa)) is ketoreductase (KR) domain. The segment at 2408–2430 (RARDAKEQSNSQGGGTDSKISPG) is disordered. Residues 2441–2518 (EAIDVVGRAI…ALATTVATKS (78 aa)) enclose the Carrier domain. At serine 2478 the chain carries O-(pantetheine 4'-phosphoryl)serine.

The protein operates within secondary metabolite biosynthesis. Functionally, highly reducing polyketide synthase (HR-PKS); part of the gene cluster that mediates the biosynthesis of squalestatin S1 (SQS1, also known as zaragozic acid A), a heavily oxidized fungal polyketide that offers potent cholesterol lowering activity by targeting squalene synthase (SS). SQS1 is composed of a 2,8-dioxobicyclic[3.2.1]octane-3,4,5-tricarboxyclic acid core that is connected to two lipophilic polyketide arms. These initial steps feature the priming of an unusual benzoic acid starter unit onto the highly reducing polyketide synthase clz14, followed by oxaloacetate extension and product release to generate a tricarboxylic acid containing product. The phenylalanine ammonia lyase (PAL) clz10 and the acyl-CoA ligase clz12 are involved in transforming phenylalanine into benzoyl-CoA. The citrate synthase-like protein clz17 is involved in connecting the C-alpha-carbons of the hexaketide chain and oxaloacetate to afford the tricarboxylic acid unit. The potential hydrolytic enzymes, clz11 and clz13, are in close proximity to pks2 and may participate in product release. On the other side, the tetraketide arm is synthesized by a the squalestatin tetraketide synthase clz2 and enzymatically esterified to the core in the last biosynthetic step, by the acetyltransferase clz6. The biosynthesis of the tetraketide must involve 3 rounds of chain extension. After the first and second rounds methyl-transfer occurs, and in all rounds of extension the ketoreductase and dehydratase are active. The enoyl reductase and C-MeT of clz2 are not active in the final round of extension. The acetyltransferase clz6 appears to have a broad substrate selectivity for its acyl CoA substrate, allowing the in vitro synthesis of novel squalestatins. The biosynthesis of SQS1 requires several oxidative steps likely performed by oxidoreductases clz3, clz15 and clz16. Finally, in support of the identification of the cluster as being responsible for SQS1 production, the cluster contains a gene encoding a putative squalene synthase (SS) clz20, suggesting a likely mechanism for self-resistance. This chain is Squalestatin tetraketide synthase clz2, found in Cochliobolus lunatus (Filamentous fungus).